We begin with the raw amino-acid sequence, 623 residues long: NAD-dependent malic enzyme 1, mitochondrial (623 aa).

The N-terminal 38 residues, 1–38 (MGIANKLRLSSSSLSRILHRRILYSSAVRSFTTSEGHR), are a transit peptide targeting the mitochondrion. The active-site Proton donor is Tyr-143. Residue Arg-196 participates in NAD(+) binding. The Proton acceptor role is filled by Lys-214. Positions 285, 286, and 309 each coordinate a divalent metal cation. Residues Asp-309 and Asn-464 each contribute to the NAD(+) site.

It belongs to the malic enzymes family. In terms of assembly, homodimer. Heterodimer of two related subunits in NAD-MEH complex. Interacts with NAD-ME2. It depends on Mg(2+) as a cofactor. Mn(2+) is required as a cofactor. As to expression, expressed in leaves, stems, flowers, and roots (at protein level).

It is found in the mitochondrion. It catalyses the reaction (S)-malate + NAD(+) = pyruvate + CO2 + NADH. Its activity is regulated as follows. Activated by oxaloacetate (OAA), 2-ketoglutarate, succinate and fumarate as homodimer and by OAA, 2-ketoglutarate, succinate, fumarate and coenzyme A (acetyl-CoA and CoA) as heterodimer NAD-MEH. Involved in the regulation of sugars and amino acids metabolisms during the night period. The protein is NAD-dependent malic enzyme 1, mitochondrial (NAD-ME1) of Arabidopsis thaliana (Mouse-ear cress).